A 256-amino-acid chain; its full sequence is tRNA-cytidine(32) 2-sulfurtransferase (256 aa).

Residues 35-40 (SGGKDS) carry the PP-loop motif motif. [4Fe-4S] cluster is bound by residues C110, C113, and C201.

This sequence belongs to the TtcA family. In terms of assembly, homodimer. Requires Mg(2+) as cofactor. The cofactor is [4Fe-4S] cluster.

The protein resides in the cytoplasm. It catalyses the reaction cytidine(32) in tRNA + S-sulfanyl-L-cysteinyl-[cysteine desulfurase] + AH2 + ATP = 2-thiocytidine(32) in tRNA + L-cysteinyl-[cysteine desulfurase] + A + AMP + diphosphate + H(+). It participates in tRNA modification. Its function is as follows. Catalyzes the ATP-dependent 2-thiolation of cytidine in position 32 of tRNA, to form 2-thiocytidine (s(2)C32). The sulfur atoms are provided by the cysteine/cysteine desulfurase (IscS) system. The chain is tRNA-cytidine(32) 2-sulfurtransferase from Coxiella burnetii (strain RSA 331 / Henzerling II).